The primary structure comprises 315 residues: Coproporphyrin III ferrochelatase (315 aa).

Fe-coproporphyrin III is bound by residues Tyr13, Arg30, 46–47 (RY), Ser54, and Tyr125. 2 residues coordinate Fe(2+): His183 and Glu264.

The protein belongs to the ferrochelatase family.

Its subcellular location is the cytoplasm. The enzyme catalyses Fe-coproporphyrin III + 2 H(+) = coproporphyrin III + Fe(2+). Its pathway is porphyrin-containing compound metabolism; protoheme biosynthesis. Functionally, involved in coproporphyrin-dependent heme b biosynthesis. Catalyzes the insertion of ferrous iron into coproporphyrin III to form Fe-coproporphyrin III. This chain is Coproporphyrin III ferrochelatase, found in Anoxybacillus flavithermus (strain DSM 21510 / WK1).